The chain runs to 1849 residues: SH3 and multiple ankyrin repeat domains protein 2 (1849 aa).

Residues 1 to 33 (MPRSPTSSEDEMAQSFSDYSVGSESDSSKEETI) form a disordered region. Low complexity predominate over residues 15–25 (SFSDYSVGSES). ANK repeat units lie at residues 196–226 (TGETPLTLAAQLDDSVEVIKALKNGGAHLDF), 230–259 (DGMTALHKAARARNQVALKTLLELGASPDY), 263–293 (YGLTPLYHTAIVGGDPYCCELLLHEHATVCC), 297–326 (NGWHEIHQACRYGHVQHLEHLLFYGADMSA), 330–359 (SGNTALHICALYNQDSCARVLLFRGGNKEL), and 363–393 (NSQTPFQVAIIAGNFELAEYIKNHKETDIVP). The interval 451 to 493 (QQMPSKPEGAAKTIGSYVPGPRSRSPSLNRLGGAGEDGKRPQP) is disordered. Residues 526-585 (VPGRLFVAVKPYQPQVDGEIPLHRGDRVKVLSIGEGGFWEGSARGHIGWFPAECVEEVQC) enclose the SH3 domain. Positions 626-720 (TVVLQKKDNE…HLVLKVVTVT (95 aa)) constitute a PDZ domain. The span at 764-774 (SVRKKKDKPEE) shows a compositional bias: basic and acidic residues. The disordered stretch occupies residues 764-808 (SVRKKKDKPEEIVPASKPSRAAENMAVEPRVATIKQRPSSRCFPA). Ser831 carries the phosphoserine modification. At Thr860 the chain carries Phosphothreonine. Residues 878–910 (LSMPDTSEDIPPPPQSVPPSPPPPSPTTYNCPK) are disordered. Pro residues predominate over residues 887-903 (IPPPPQSVPPSPPPPSP). Ser960 carries the post-translational modification Phosphoserine. Disordered stretches follow at residues 1013 to 1293 (LVKQ…RKGD), 1328 to 1371 (LQEE…TTVP), 1432 to 1526 (PALS…GGEN), and 1574 to 1594 (SFVIPPPAPPPPPGSAQPGMA). Low complexity predominate over residues 1040–1052 (STSSSGKSSQGSS). Positions 1086-1097 (VRDREKRLEARR) are enriched in basic and acidic residues. Phosphoserine is present on Ser1099. Over residues 1128-1138 (EEGDFADEDSA) the composition is skewed to acidic residues. Low complexity-rich tracts occupy residues 1159–1170 (GGAEASAPGEAG), 1181–1199 (GPESSPAVPSASSGTAGPG), and 1208–1221 (RLLDPSSPLALALS). Positions 1274-1293 (RRQETENKYETDLGRDRKGD) are enriched in basic and acidic residues. Thr1278 carries the post-translational modification Phosphothreonine. The SH3-binding signature appears at 1327–1333 (ALQEEDE). Positions 1343 to 1357 (SSPSEVPEGVSETEG) are enriched in low complexity. A compositionally biased stretch (polar residues) spans 1445-1460 (TPQSPSLNSSQPTNSA). A compositionally biased stretch (basic and acidic residues) spans 1494 to 1505 (VDSRSSSDHHLE). Positions 1506-1522 (TTSTISTVSSISTLSSE) are enriched in low complexity. Residues 1577–1588 (IPPPAPPPPPGS) are compositionally biased toward pro residues. A glycan (O-linked (GlcNAc) threonine) is linked at Thr1667. A compositionally biased stretch (polar residues) spans 1678–1692 (FTVRPGTSQPITLQS). A disordered region spans residues 1678–1776 (FTVRPGTSQP…SILQQPISNK (99 aa)). Phosphoserine is present on residues Ser1709 and Ser1713. 2 stretches are compositionally biased toward low complexity: residues 1721 to 1738 (TLPAPLSAATASPSPALS) and 1760 to 1774 (RSRSPSPSILQQPIS). An SAM domain is found at 1786–1849 (WTKPDVADWL…ERALKQLLDR (64 aa)).

It belongs to the SHANK family. Is part of a complex with DLG4/PSD-95 and DLGAP1/GKAP. Interacts with CTTN/cortactin SH3 domain, DLGAP1/GKAP and alpha-latrotoxin receptor 1. Interacts with DNM2, DBNL, GRID2, BAIAP2, SLC9A3, PLCB3 and CFTR. Interacts (via proline-rich region) with PDE4D. Interacts with ABI1 (via SH3 domain). In terms of tissue distribution, isoform 3 is present in epithelial colonic cells (at protein level).

Its subcellular location is the apical cell membrane. The protein localises to the cytoplasm. The protein resides in the synapse. It is found in the postsynaptic density. It localises to the cell projection. Its subcellular location is the growth cone. The protein localises to the dendritic spine. Functionally, seems to be an adapter protein in the postsynaptic density (PSD) of excitatory synapses that interconnects receptors of the postsynaptic membrane including NMDA-type and metabotropic glutamate receptors, and the actin-based cytoskeleton. May play a role in the structural and functional organization of the dendritic spine and synaptic junction. This chain is SH3 and multiple ankyrin repeat domains protein 2 (SHANK2), found in Homo sapiens (Human).